Consider the following 1072-residue polypeptide: Carbamoyl phosphate synthase large chain (1072 aa).

The interval 1 to 401 is carboxyphosphate synthetic domain; that stretch reads MPKRLDINTI…SLLKAVRSLE (401 aa). ATP is bound by residues Arg129, Arg169, Gly175, Gly176, Lys208, Ile210, Glu215, Gly241, Val242, His243, Gln284, and Glu298. An ATP-grasp 1 domain is found at 133–327; sequence RTLMQELNEP…IAKLAAKIAV (195 aa). Gln284, Glu298, and Asn300 together coordinate Mg(2+). Gln284, Glu298, and Asn300 together coordinate Mn(2+). The segment at 402–546 is oligomerization domain; the sequence is LGIYHLELDH…YSTYADENEL (145 aa). Positions 547 to 929 are carbamoyl phosphate synthetic domain; sequence IVTDRKSVVV…ALYKGLVASG (383 aa). In terms of domain architecture, ATP-grasp 2 spans 671-861; it reads EAALTKLGIP…MANVATKVIL (191 aa). Arg707, Arg746, Glu752, Gly777, Val778, His779, Ser780, Gln820, and Glu832 together coordinate ATP. Gln820, Glu832, and Asn834 together coordinate Mg(2+). Mn(2+) is bound by residues Gln820, Glu832, and Asn834. An MGS-like domain is found at 930-1072; the sequence is INIPTHGSVI…QTKRHEVVHA (143 aa). Positions 930-1072 are allosteric domain; sequence INIPTHGSVI…QTKRHEVVHA (143 aa).

The protein belongs to the CarB family. As to quaternary structure, composed of two chains; the small (or glutamine) chain promotes the hydrolysis of glutamine to ammonia, which is used by the large (or ammonia) chain to synthesize carbamoyl phosphate. Tetramer of heterodimers (alpha,beta)4. The cofactor is Mg(2+). Mn(2+) is required as a cofactor.

The enzyme catalyses hydrogencarbonate + L-glutamine + 2 ATP + H2O = carbamoyl phosphate + L-glutamate + 2 ADP + phosphate + 2 H(+). It carries out the reaction hydrogencarbonate + NH4(+) + 2 ATP = carbamoyl phosphate + 2 ADP + phosphate + 2 H(+). Its pathway is amino-acid biosynthesis; L-arginine biosynthesis; carbamoyl phosphate from bicarbonate: step 1/1. It functions in the pathway pyrimidine metabolism; UMP biosynthesis via de novo pathway; (S)-dihydroorotate from bicarbonate: step 1/3. Large subunit of the glutamine-dependent carbamoyl phosphate synthetase (CPSase). CPSase catalyzes the formation of carbamoyl phosphate from the ammonia moiety of glutamine, carbonate, and phosphate donated by ATP, constituting the first step of 2 biosynthetic pathways, one leading to arginine and/or urea and the other to pyrimidine nucleotides. The large subunit (synthetase) binds the substrates ammonia (free or transferred from glutamine from the small subunit), hydrogencarbonate and ATP and carries out an ATP-coupled ligase reaction, activating hydrogencarbonate by forming carboxy phosphate which reacts with ammonia to form carbamoyl phosphate. This Bacillus anthracis (strain A0248) protein is Carbamoyl phosphate synthase large chain.